The primary structure comprises 119 residues: Large ribosomal subunit protein bL12 (119 aa).

The protein belongs to the bacterial ribosomal protein bL12 family. In terms of assembly, homodimer. Part of the ribosomal stalk of the 50S ribosomal subunit. Forms a multimeric L10(L12)X complex, where L10 forms an elongated spine to which 2 to 4 L12 dimers bind in a sequential fashion. Binds GTP-bound translation factors.

In terms of biological role, forms part of the ribosomal stalk which helps the ribosome interact with GTP-bound translation factors. Is thus essential for accurate translation. The sequence is that of Large ribosomal subunit protein bL12 from Colwellia psychrerythraea (strain 34H / ATCC BAA-681) (Vibrio psychroerythus).